The following is a 338-amino-acid chain: Ornithine carbamoyltransferase (338 aa).

Residues 56-59 (STRT), Arg-107, and 134-137 (HPTQ) contribute to the carbamoyl phosphate site. L-ornithine-binding positions include Asn-168, Asp-232, and 236-237 (SM). Carbamoyl phosphate is bound by residues 274-275 (CL) and Arg-320.

It belongs to the aspartate/ornithine carbamoyltransferase superfamily. OTCase family.

The protein resides in the cytoplasm. The enzyme catalyses carbamoyl phosphate + L-ornithine = L-citrulline + phosphate + H(+). It functions in the pathway amino-acid biosynthesis; L-arginine biosynthesis; L-arginine from L-ornithine and carbamoyl phosphate: step 1/3. Reversibly catalyzes the transfer of the carbamoyl group from carbamoyl phosphate (CP) to the N(epsilon) atom of ornithine (ORN) to produce L-citrulline. In Buchnera aphidicola subsp. Acyrthosiphon pisum (strain APS) (Acyrthosiphon pisum symbiotic bacterium), this protein is Ornithine carbamoyltransferase (argI).